The sequence spans 488 residues: Probable indole-3-acetic acid-amido synthetase GH3.6 (488 aa).

Belongs to the IAA-amido conjugating enzyme family. Expressed in roots and callus.

May catalyze the synthesis of indole-3-acetic acid (IAA)-amino acid conjugates, providing a mechanism for the plant to cope with the presence of excess auxin. The polypeptide is Probable indole-3-acetic acid-amido synthetase GH3.6 (GH3.6) (Oryza sativa subsp. japonica (Rice)).